The primary structure comprises 125 residues: Large ribosomal subunit protein bL12 (125 aa).

It belongs to the bacterial ribosomal protein bL12 family. As to quaternary structure, homodimer. Part of the ribosomal stalk of the 50S ribosomal subunit. Forms a multimeric L10(L12)X complex, where L10 forms an elongated spine to which 2 to 4 L12 dimers bind in a sequential fashion. Binds GTP-bound translation factors.

Functionally, forms part of the ribosomal stalk which helps the ribosome interact with GTP-bound translation factors. Is thus essential for accurate translation. The sequence is that of Large ribosomal subunit protein bL12 from Rickettsia prowazekii (strain Madrid E).